We begin with the raw amino-acid sequence, 486 residues long: Cytochrome P450 monooxygenase aclC (486 aa).

Cysteine 427 contacts heme.

The protein belongs to the cytochrome P450 family. It depends on heme as a cofactor.

Its pathway is mycotoxin biosynthesis. Its function is as follows. Cytochrome P450 monooxygenase; part of the gene cluster that mediates the biosynthesis of aspirochlorine (or antibiotic A30641), an unusual halogenated spiro compound with distinctive antifungal properties due to selective inhibition of protein biosynthesis, and which is also active against bacteria, viruses, and murine tumor cells. The non-ribosomal peptide synthetase (NRPS) aclP is responsible the formation of the diketopiperazine (DKP) core from the condensation of 2 phenylalanine residues. One Phe residue is tailored into chlorotyrosine by hydroxylation and chlorination, whereas the second Phe undergoes an unprecedented C-C bond cleavage to be converted into glycine. After formation of the DKP, sulfur is incorporated into the DKP by conjugation with glutathione by aclG, followed by its stepwise degradation to the thiol by aclI, aclJ and aclK, and the dithiol oxidation by aclT. In addition, oxygenases (aclB, aclC, aclL and aclO) and O-methyltransferases (aclM and aclU) act as tailoring enzymes to produce the intermediate dechloroaspirochlorine. Ultimately, chlorination of dechloroaspirochlorine by the halogenase aclH is the last step in the aspirochlorine pathway. This is Cytochrome P450 monooxygenase aclC from Aspergillus oryzae (strain ATCC 42149 / RIB 40) (Yellow koji mold).